Consider the following 280-residue polypeptide: Ycf3-interacting protein 1, chloroplastic (280 aa).

Residues 1–62 constitute a chloroplast transit peptide; sequence MTTQIFQLPL…NNRRFGSLIV (62 aa). The segment at 75–103 is disordered; the sequence is PVPLTLEQQEKEKQNRDDEEDEIDEGDVD. Over residues 91-103 the composition is skewed to acidic residues; sequence DDEEDEIDEGDVD. A helical transmembrane segment spans residues 255 to 275; sequence ALYFVSALPVIIGISVVLILF.

Belongs to the Y3IP1/CEST family. Interacts with Ycf3. In terms of tissue distribution, expressed in cotyledons, rosette and cauline leaves, stems and sepals.

The protein resides in the plastid. Its subcellular location is the chloroplast thylakoid membrane. Nuclear genome-encoded factor that participates in photosystem I (PSI) biogenesis. Cooperates with the plastid genome-encoded protein PSI assembly Ycf3 in the assembly of stable PSI units in the thylakoid membrane. Involved in light-induced chloroplast development and growth. Involved in the plant response to abiotic and photooxidative stresses. May be involved in the suppression of photooxidative damage. In Arabidopsis thaliana (Mouse-ear cress), this protein is Ycf3-interacting protein 1, chloroplastic.